The chain runs to 206 residues: Cytochrome b6-f complex iron-sulfur subunit, chloroplastic (206 aa).

A chloroplast-targeting transit peptide spans Met-1–Ala-29. The helical transmembrane segment at Ile-48 to Phe-68 threads the bilayer. The Rieske domain occupies Ala-92 to Thr-188. Residues Cys-134, His-136, Cys-152, and His-155 each contribute to the [2Fe-2S] cluster site. A disulfide bridge connects residues Cys-139 and Cys-154.

The protein belongs to the Rieske iron-sulfur protein family. The 4 large subunits of the cytochrome b6-f complex are cytochrome b6, subunit IV (17 kDa polypeptide, petD), cytochrome f and the Rieske protein, while the 4 small subunits are petG, petL, petM and petN. The complex functions as a dimer. [2Fe-2S] cluster is required as a cofactor.

The protein localises to the plastid. It is found in the chloroplast thylakoid membrane. The catalysed reaction is 2 oxidized [plastocyanin] + a plastoquinol + 2 H(+)(in) = 2 reduced [plastocyanin] + a plastoquinone + 4 H(+)(out). Component of the cytochrome b6-f complex, which mediates electron transfer between photosystem II (PSII) and photosystem I (PSI), cyclic electron flow around PSI, and state transitions. The protein is Cytochrome b6-f complex iron-sulfur subunit, chloroplastic (petC) of Volvox carteri (Green alga).